We begin with the raw amino-acid sequence, 276 residues long: Putative pyruvate, phosphate dikinase regulatory protein 1 (276 aa).

150-157 contacts ADP; it reads GLPRTSKT.

It belongs to the pyruvate, phosphate/water dikinase regulatory protein family. PDRP subfamily.

The enzyme catalyses N(tele)-phospho-L-histidyl/L-threonyl-[pyruvate, phosphate dikinase] + ADP = N(tele)-phospho-L-histidyl/O-phospho-L-threonyl-[pyruvate, phosphate dikinase] + AMP + H(+). It carries out the reaction N(tele)-phospho-L-histidyl/O-phospho-L-threonyl-[pyruvate, phosphate dikinase] + phosphate + H(+) = N(tele)-phospho-L-histidyl/L-threonyl-[pyruvate, phosphate dikinase] + diphosphate. Functionally, bifunctional serine/threonine kinase and phosphorylase involved in the regulation of the pyruvate, phosphate dikinase (PPDK) by catalyzing its phosphorylation/dephosphorylation. The sequence is that of Putative pyruvate, phosphate dikinase regulatory protein 1 from Syntrophomonas wolfei subsp. wolfei (strain DSM 2245B / Goettingen).